The chain runs to 327 residues: Phenylalanine--tRNA ligase alpha subunit (327 aa).

Mg(2+) is bound at residue Glu252.

The protein belongs to the class-II aminoacyl-tRNA synthetase family. Phe-tRNA synthetase alpha subunit type 1 subfamily. In terms of assembly, tetramer of two alpha and two beta subunits. Mg(2+) serves as cofactor.

The protein localises to the cytoplasm. The catalysed reaction is tRNA(Phe) + L-phenylalanine + ATP = L-phenylalanyl-tRNA(Phe) + AMP + diphosphate + H(+). The protein is Phenylalanine--tRNA ligase alpha subunit of Proteus mirabilis (strain HI4320).